A 97-amino-acid polypeptide reads, in one-letter code: Cysteine-rich and transmembrane domain-containing protein 1 (97 aa).

A compositionally biased stretch (pro residues) spans 1–40 (MNQENPPPYPGPGPTAPYPPYPPQPMGPGPMGGPYPPPQG). The tract at residues 1–61 (MNQENPPPYP…QGGPQEPPKT (61 aa)) is disordered. Residues 41–50 (YPYQGYPQYG) show a composition bias toward low complexity. Residues 74 to 91 (LGPSTCLTACWTALCCCC) form a helical membrane-spanning segment.

This sequence belongs to the CYSTM1 family.

It is found in the membrane. The protein is Cysteine-rich and transmembrane domain-containing protein 1 (CYSTM1) of Homo sapiens (Human).